The sequence spans 164 residues: R-phycoerythrin alpha chain (164 aa).

(2R,3E)-phycoerythrobilin is bound by residues C82 and C139.

It belongs to the phycobiliprotein family. In terms of assembly, heterodimer of an alpha and a beta chain. In terms of processing, contains two covalently linked bilin chromophores.

It localises to the plastid. The protein resides in the chloroplast thylakoid membrane. In terms of biological role, light-harvesting photosynthetic bile pigment-protein from the phycobiliprotein complex. The polypeptide is R-phycoerythrin alpha chain (cpeA) (Porphyra purpurea (Red seaweed)).